Here is a 193-residue protein sequence, read N- to C-terminus: Potassium-transporting ATPase KdpC subunit (193 aa).

Residues 9–29 (VLMTVVTTVLLGLVYPLLITG) form a helical membrane-spanning segment.

It belongs to the KdpC family. In terms of assembly, the system is composed of three essential subunits: KdpA, KdpB and KdpC.

The protein localises to the cell inner membrane. Functionally, part of the high-affinity ATP-driven potassium transport (or Kdp) system, which catalyzes the hydrolysis of ATP coupled with the electrogenic transport of potassium into the cytoplasm. This subunit acts as a catalytic chaperone that increases the ATP-binding affinity of the ATP-hydrolyzing subunit KdpB by the formation of a transient KdpB/KdpC/ATP ternary complex. The polypeptide is Potassium-transporting ATPase KdpC subunit (Koribacter versatilis (strain Ellin345)).